The chain runs to 333 residues: Sphingomyelinase C (333 aa).

Residues 1-27 (MKGKLLKGVLSFGIGLGVLYGGSSVQA) form the signal peptide. Residues Cys150 and Cys186 are joined by a disulfide bond.

The protein belongs to the neutral sphingomyelinase family. Requires Mg(2+) as cofactor.

Its subcellular location is the secreted. It carries out the reaction a sphingomyelin + H2O = phosphocholine + an N-acylsphing-4-enine + H(+). With respect to regulation, activated by cobalt and manganese ions. In terms of biological role, required, with sphingomyelinase, to effect target cell lysis (hemolysis). The protein is Sphingomyelinase C (sph) of Bacillus cereus.